The primary structure comprises 200 residues: MEKFTKHTGIGVPLRQSNVDTDQIIPAVYLKRITRTGFEDALFSAWRKDSSFILNQEPFNAGSVLVAGPDFGTGSSREHAVWALKDYGFRAVLSSRFADIFRGNSGKQGLLAAQVAQDDIELIWKELENAPGTQVTVDLESKTVVCGNIVAPFEIDDYTRWRLLEGLDDIGLTLQHEADITAYEATRPSFKPKTLPAKVS.

It belongs to the LeuD family. LeuD type 1 subfamily. Heterodimer of LeuC and LeuD.

The catalysed reaction is (2R,3S)-3-isopropylmalate = (2S)-2-isopropylmalate. The protein operates within amino-acid biosynthesis; L-leucine biosynthesis; L-leucine from 3-methyl-2-oxobutanoate: step 2/4. Catalyzes the isomerization between 2-isopropylmalate and 3-isopropylmalate, via the formation of 2-isopropylmaleate. In Pseudarthrobacter chlorophenolicus (strain ATCC 700700 / DSM 12829 / CIP 107037 / JCM 12360 / KCTC 9906 / NCIMB 13794 / A6) (Arthrobacter chlorophenolicus), this protein is 3-isopropylmalate dehydratase small subunit.